Here is a 522-residue protein sequence, read N- to C-terminus: Transactivator/viroplasmin protein (522 aa).

Residues 488 to 522 form a disordered region; sequence DASADEGTTDKSGPPPTRSIVEKEDVPNTSSKQVD.

The protein belongs to the caulimoviridae viroplasmin family.

It localises to the host cytoplasm. Functionally, enhances the ribosomal termination-reinitiation event leading to the translation of major open reading frames on the polycistronic viral RNAs. The chain is Transactivator/viroplasmin protein from Cauliflower mosaic virus (strain D/H) (CaMV).